Reading from the N-terminus, the 213-residue chain is Receptor-binding cancer antigen expressed on SiSo cells (213 aa).

Residues 1-6 (MAITQF) lie on the Extracellular side of the membrane. Residues 7 to 27 (RLFKFCTCLATVFSFLKRLIC) traverse the membrane as a helical; Signal-anchor for type III membrane protein segment. The Cytoplasmic segment spans residues 28 to 213 (RSGRGRKLSG…EQNKIGVKLS (186 aa)). A Phosphoserine modification is found at Ser-36. Thr-41 is subject to Phosphothreonine. Position 94 is a phosphotyrosine (Tyr-94). The stretch at 163-211 (EDAAWQAEEVLRQQKLADREKRAAEQQRKKMEKEAQRLMKKEQNKIGVK) forms a coiled coil. Positions 178–206 (LADREKRAAEQQRKKMEKEAQRLMKKEQN) are enriched in basic and acidic residues. The disordered stretch occupies residues 178–213 (LADREKRAAEQQRKKMEKEAQRLMKKEQNKIGVKLS).

Homodimer. In terms of tissue distribution, widely expressed. Expressed in ovary, testis, prostate, thymus, muscle and heart, but not in small intestine, colon, lymph nodes, or peripherical blood lymphocytes. The protein is not detected in any of the above organs.

It localises to the golgi apparatus membrane. Functionally, may participate in suppression of cell proliferation and induces apoptotic cell death through activation of interleukin-1-beta converting enzyme (ICE)-like proteases. The sequence is that of Receptor-binding cancer antigen expressed on SiSo cells (EBAG9) from Homo sapiens (Human).